A 122-amino-acid polypeptide reads, in one-letter code: Large ribosomal subunit protein uL14 (122 aa).

This sequence belongs to the universal ribosomal protein uL14 family. Part of the 50S ribosomal subunit. Forms a cluster with proteins L3 and L19. In the 70S ribosome, L14 and L19 interact and together make contacts with the 16S rRNA in bridges B5 and B8.

Its function is as follows. Binds to 23S rRNA. Forms part of two intersubunit bridges in the 70S ribosome. This is Large ribosomal subunit protein uL14 from Albidiferax ferrireducens (strain ATCC BAA-621 / DSM 15236 / T118) (Rhodoferax ferrireducens).